Reading from the N-terminus, the 75-residue chain is Translational regulator CsrA (75 aa).

The protein belongs to the CsrA/RsmA family. As to quaternary structure, homodimer; the beta-strands of each monomer intercalate to form a hydrophobic core, while the alpha-helices form wings that extend away from the core.

The protein localises to the cytoplasm. Its function is as follows. A translational regulator that binds mRNA to regulate translation initiation and/or mRNA stability. Usually binds in the 5'-UTR at or near the Shine-Dalgarno sequence preventing ribosome-binding, thus repressing translation. Its main target seems to be the major flagellin gene, while its function is anatagonized by FliW. This chain is Translational regulator CsrA, found in Exiguobacterium sibiricum (strain DSM 17290 / CCUG 55495 / CIP 109462 / JCM 13490 / 255-15).